We begin with the raw amino-acid sequence, 446 residues long: Zinc finger protein 19 (446 aa).

One can recognise a KRAB domain in the interval 2–73 (VTFEDVAVHF…EAQDDPPAET (72 aa)). 9 C2H2-type zinc fingers span residues 149-171 (FICE…QRIH), 177-199 (FECS…QRIH), 205-227 (YQCE…QRIH), 233-255 (YYCT…QRIH), 261-283 (YECN…QKIH), 289-311 (YECN…QRIH), 317-339 (YSCK…QRIH), 345-367 (FDCV…LRIH), and 373-395 (YVCD…QRIH). A C2H2-type 10; degenerate zinc finger spans residues 401 to 423 (YEYSKYEKAFGTSSQLGHLEHVH).

Belongs to the krueppel C2H2-type zinc-finger protein family.

It is found in the nucleus. May be involved in transcriptional regulation. The chain is Zinc finger protein 19 (ZNF19) from Pongo abelii (Sumatran orangutan).